The primary structure comprises 215 residues: Glutaredoxin 2 (215 aa).

One can recognise a GST N-terminal domain in the interval 1 to 77; the sequence is MKLYIYDHCP…YVDKLDGKPL (77 aa). Residues C9 and C12 are joined by a disulfide bond.

It belongs to the glutaredoxin family.

Functionally, involved in reducing some disulfides in a coupled system with glutathione reductase. Does not act as hydrogen donor for ribonucleotide reductase. The sequence is that of Glutaredoxin 2 (grxB) from Escherichia coli O157:H7.